Here is a 336-residue protein sequence, read N- to C-terminus: UDP-N-acetylglucosamine--N-acetylmuramyl-(pentapeptide) pyrophosphoryl-undecaprenol N-acetylglucosamine transferase (336 aa).

UDP-N-acetyl-alpha-D-glucosamine contacts are provided by Asn102, Arg144, Ser172, and Gln264.

The protein belongs to the glycosyltransferase 28 family. MurG subfamily.

The protein localises to the cell membrane. It carries out the reaction di-trans,octa-cis-undecaprenyl diphospho-N-acetyl-alpha-D-muramoyl-L-alanyl-D-glutamyl-meso-2,6-diaminopimeloyl-D-alanyl-D-alanine + UDP-N-acetyl-alpha-D-glucosamine = di-trans,octa-cis-undecaprenyl diphospho-[N-acetyl-alpha-D-glucosaminyl-(1-&gt;4)]-N-acetyl-alpha-D-muramoyl-L-alanyl-D-glutamyl-meso-2,6-diaminopimeloyl-D-alanyl-D-alanine + UDP + H(+). It functions in the pathway cell wall biogenesis; peptidoglycan biosynthesis. Functionally, cell wall formation. Catalyzes the transfer of a GlcNAc subunit on undecaprenyl-pyrophosphoryl-MurNAc-pentapeptide (lipid intermediate I) to form undecaprenyl-pyrophosphoryl-MurNAc-(pentapeptide)GlcNAc (lipid intermediate II). This is UDP-N-acetylglucosamine--N-acetylmuramyl-(pentapeptide) pyrophosphoryl-undecaprenol N-acetylglucosamine transferase from Rubrobacter xylanophilus (strain DSM 9941 / JCM 11954 / NBRC 16129 / PRD-1).